The primary structure comprises 659 residues: Anoctamin-10 (659 aa).

Residues M1–T207 are Cytoplasmic-facing. Residues I208–I228 form a helical membrane-spanning segment. Residues G229–Y240 lie on the Extracellular side of the membrane. A helical membrane pass occupies residues D241–W261. Topologically, residues K262 to L316 are cytoplasmic. A helical transmembrane segment spans residues V317 to F337. The Extracellular segment spans residues D338 to S352. A helical transmembrane segment spans residues E353–M373. Residues N374–L400 are Cytoplasmic-facing. The helical transmembrane segment at V401–F421 threads the bilayer. The Extracellular segment spans residues V422 to E500. Residues L501–F521 traverse the membrane as a helical segment. At A522 to G553 the chain is on the cytoplasmic side. The chain crosses the membrane as a helical span at residues V554 to I574. The Extracellular portion of the chain corresponds to G575–D590. Residues L591–F611 traverse the membrane as a helical segment. Topologically, residues A612–T659 are cytoplasmic.

It belongs to the anoctamin family. Predominant expression seen in epithelial tissues.

The protein localises to the cell membrane. Functionally, does not exhibit calcium-activated chloride channel (CaCC) activity. Can inhibit the activity of ANO1. This is Anoctamin-10 (Ano10) from Mus musculus (Mouse).